The primary structure comprises 139 residues: Acidic phospholipase A2 5 (139 aa).

The signal sequence occupies residues M1–G16. 7 cysteine pairs are disulfide-bonded: C42-C131, C44-C60, C59-C111, C65-C139, C66-C104, C73-C97, and C91-C102. The Ca(2+) site is built by Y43, G45, and G47. H63 is a catalytic residue. D64 contributes to the Ca(2+) binding site. D105 is a catalytic residue.

This sequence belongs to the phospholipase A2 family. Group II subfamily. D49 sub-subfamily. The cofactor is Ca(2+). Expressed by the venom gland.

It localises to the secreted. The enzyme catalyses a 1,2-diacyl-sn-glycero-3-phosphocholine + H2O = a 1-acyl-sn-glycero-3-phosphocholine + a fatty acid + H(+). Functionally, PLA2 catalyzes the calcium-dependent hydrolysis of the 2-acyl groups in 3-sn-phosphoglycerides. The protein is Acidic phospholipase A2 5 of Echis pyramidum leakeyi (Leakey's carpet viper).